The sequence spans 319 residues: Transaldolase (319 aa).

The Schiff-base intermediate with substrate role is filled by Lys131.

Belongs to the transaldolase family. Type 1 subfamily. Homodimer.

The protein localises to the cytoplasm. The catalysed reaction is D-sedoheptulose 7-phosphate + D-glyceraldehyde 3-phosphate = D-erythrose 4-phosphate + beta-D-fructose 6-phosphate. The protein operates within carbohydrate degradation; pentose phosphate pathway; D-glyceraldehyde 3-phosphate and beta-D-fructose 6-phosphate from D-ribose 5-phosphate and D-xylulose 5-phosphate (non-oxidative stage): step 2/3. Transaldolase is important for the balance of metabolites in the pentose-phosphate pathway. The sequence is that of Transaldolase from Wigglesworthia glossinidia brevipalpis.